The sequence spans 139 residues: Endoribonuclease YbeY (139 aa).

Residues His-107, His-111, and Asp-117 each coordinate Zn(2+).

The protein belongs to the endoribonuclease YbeY family. Requires Zn(2+) as cofactor.

The protein resides in the cytoplasm. In terms of biological role, single strand-specific metallo-endoribonuclease involved in late-stage 70S ribosome quality control and in maturation of the 3' terminus of the 16S rRNA. This chain is Endoribonuclease YbeY, found in Azobacteroides pseudotrichonymphae genomovar. CFP2.